We begin with the raw amino-acid sequence, 871 residues long: Probable LRR receptor-like serine/threonine-protein kinase At1g51810 (871 aa).

The signal sequence occupies residues 1 to 20; the sequence is MERHCLFFVIFSLILHLVQA. Topologically, residues 21–512 are extracellular; that stretch reads QDPIGFINLD…GRQIKSMTIP (492 aa). 11 N-linked (GlcNAc...) asparagine glycosylation sites follow: N93, N179, N229, N283, N295, N396, N410, N439, N458, N463, and N489. 3 LRR repeats span residues 405–426, 429–449, and 453–474; these read IITSLNLSSSGLTGIIVLTIQN, NLQELDLSNNNLSGGVPEFLA, and SLLVINLSGNNLSGVVPQKLIE. The helical transmembrane segment at 513 to 533 threads the bilayer; that stretch reads IVASIGSVVAFTVALMIFCVV. Topologically, residues 534–871 are cytoplasmic; that stretch reads RKNNPSNDEA…FGTEVAPMAR (338 aa). The residue at position 568 (T568) is a Phosphothreonine. The Protein kinase domain occupies 577–850; that stretch reads NNFQKILGKG…QVVFELKECL (274 aa). Residues 583–591 and K605 each bind ATP; that span reads LGKGGFGIV. Y650 carries the post-translational modification Phosphotyrosine. Catalysis depends on D702, which acts as the Proton acceptor. S736 carries the post-translational modification Phosphoserine. Residues T737 and T742 each carry the phosphothreonine modification. Y750 is subject to Phosphotyrosine.

Belongs to the protein kinase superfamily. Ser/Thr protein kinase family.

It is found in the membrane. The enzyme catalyses L-seryl-[protein] + ATP = O-phospho-L-seryl-[protein] + ADP + H(+). It carries out the reaction L-threonyl-[protein] + ATP = O-phospho-L-threonyl-[protein] + ADP + H(+). This Arabidopsis thaliana (Mouse-ear cress) protein is Probable LRR receptor-like serine/threonine-protein kinase At1g51810.